The primary structure comprises 144 residues: Large ribosomal subunit protein uL14 (144 aa).

It belongs to the universal ribosomal protein uL14 family. Part of the 50S ribosomal subunit. Forms a cluster with proteins L3 and L24e, part of which may contact the 16S rRNA in 2 intersubunit bridges.

In terms of biological role, binds to 23S rRNA. Forms part of two intersubunit bridges in the 70S ribosome. The chain is Large ribosomal subunit protein uL14 from Pyrobaculum islandicum (strain DSM 4184 / JCM 9189 / GEO3).